Consider the following 496-residue polypeptide: Glycine receptor subunit beta (496 aa).

The signal sequence occupies residues 1–22 (MKFSLAVSFFILMSLLFEDACS). Residues 23-268 (KEKSSKKGKG…IFTLRRQVGF (246 aa)) lie on the Extracellular side of the membrane. N54 carries N-linked (GlcNAc...) asparagine glycosylation. Residues R108 and S174 each contribute to the glycine site. A disulfide bridge links C183 with C197. N242 is a glycosylation site (N-linked (GlcNAc...) asparagine). C243 and C255 are disulfide-bonded. T250 provides a ligand contact to glycine. Residues 269 to 289 (YMMGVYAPTLLIVVLSWLSFW) traverse the membrane as a helical segment. The Cytoplasmic segment spans residues 290–294 (INPDA). The chain crosses the membrane as a helical span at residues 295–315 (SAARVPLGIFSVLSLASECTT). The Extracellular segment spans residues 316 to 327 (LAAELPKVSYVK). The helical transmembrane segment at 328–349 (ALDVWLIACLLFGFASLVEYAV) threads the bilayer. Residues 350 to 471 (VQVMLNNPKR…KPVIPTAAKR (122 aa)) lie on the Cytoplasmic side of the membrane. Phosphothreonine is present on T391. Residues 472–495 (IDLYARALFPFCFLFFNVIYWSIY) traverse the membrane as a helical segment. A topological domain (extracellular) is located at residue L496.

The protein belongs to the ligand-gated ion channel (TC 1.A.9) family. Glycine receptor (TC 1.A.9.3) subfamily. GLRB sub-subfamily. In terms of assembly, forms heteropentamers with glycin receptor alpha subunits. Heteropentamers with GLRA1 can be composed of two GLRA1 and three GLRB subunits, or three GLRA1 and two GLRB subunits, or four GLRA1 subunits and one GLRB subunit. Forms heteropentamers with GLRA2. Functional GLRB-GLRA2 heteropentamers contain four GLRA2 subunits and one GLRB subunit, although alternative subunit composition cannot be excluded. Forms a heteropentamer with GLRA3. Interacts with GPHN. As to expression, detected in spinal cord and brain stem (at protein level). Detected in spinal cord, cerebellum and brain cortex.

It localises to the postsynaptic cell membrane. The protein localises to the cell membrane. It is found in the synapse. The protein resides in the perikaryon. Its subcellular location is the cell projection. It localises to the dendrite. The protein localises to the cytoplasm. The enzyme catalyses chloride(in) = chloride(out). Channel opening is triggered by extracellular glycine. Heteropentameric channels composed of GLRB and GLRA1 are activated by lower glycine levels than homopentameric GLRA1. Its function is as follows. Subunit of heteromeric glycine-gated chloride channels. Plays an important role in the down-regulation of neuronal excitability. Contributes to the generation of inhibitory postsynaptic currents. The chain is Glycine receptor subunit beta (Glrb) from Rattus norvegicus (Rat).